The chain runs to 367 residues: Probable L-aspartate decarboxylase (367 aa).

Lys-216 is subject to N6-(pyridoxal phosphate)lysine.

This sequence belongs to the group II decarboxylase family. MfnA subfamily. Requires pyridoxal 5'-phosphate as cofactor.

It catalyses the reaction L-aspartate + H(+) = beta-alanine + CO2. The protein operates within cofactor biosynthesis; coenzyme A biosynthesis. Its function is as follows. Catalyzes the decarboxylation of L-aspartate to produce beta-alanine. In Archaeoglobus fulgidus (strain ATCC 49558 / DSM 4304 / JCM 9628 / NBRC 100126 / VC-16), this protein is Probable L-aspartate decarboxylase.